We begin with the raw amino-acid sequence, 254 residues long: Triosephosphate isomerase (254 aa).

9-11 (NWK) is a binding site for substrate. The active-site Electrophile is the His96. Glu169 (proton acceptor) is an active-site residue. Residues Gly175, Ser215, and 236–237 (GG) each bind substrate.

It belongs to the triosephosphate isomerase family. As to quaternary structure, homodimer.

It is found in the cytoplasm. The catalysed reaction is D-glyceraldehyde 3-phosphate = dihydroxyacetone phosphate. It participates in carbohydrate biosynthesis; gluconeogenesis. The protein operates within carbohydrate degradation; glycolysis; D-glyceraldehyde 3-phosphate from glycerone phosphate: step 1/1. Its function is as follows. Involved in the gluconeogenesis. Catalyzes stereospecifically the conversion of dihydroxyacetone phosphate (DHAP) to D-glyceraldehyde-3-phosphate (G3P). In Borrelia recurrentis (strain A1), this protein is Triosephosphate isomerase.